The following is a 267-amino-acid chain: MFRWSWCRLIISKVSAESYVDYLQNSDRELPALSEIFPRHGTGTGELVKFHSLLCEAMKDHNFNYVGIKVVPPTSPPLQCLRATEPVCVPIFSNSFQGSVFSAKQHRIQFVEPLFVIRLGRDPPTQLTANTVPAVCDAFFPGVEFVGSRYPFYPPHTTGFAADLGGCVAVHLGEAVSLGSASLESLGDTNFVVTRREEPIQVGAGKNCLGGPGAAVALAVSYAASMGWPLREKHYIFCSGVGSRSPALAGEYKVNYGAYGSVSASLT.

In terms of assembly, component of the REH2-associated complex (REH2C) composed of helicase REH2, associated factors H2F1 and H2F2, and mRNAs at various editing stages; the formation of the complex is RNA-independent. Interacts with various editing complexes including the RNA editing core (RECC) complex, the gRNA-binding (GRBC) complex (also known as the MRB1 complex) and the RNA editing mediator (REMC) complex.

It is found in the mitochondrion. In terms of biological role, may play a role in mitochondrial mRNA editing by facilitating the association of the gRNA-binding (GRBC) complex with the RNA editing core (RECC) complex. However, appears to be dispensable for mRNA editing per se. This is REH2-associated factor 2 from Trypanosoma brucei brucei (strain 927/4 GUTat10.1).